Here is a 120-residue protein sequence, read N- to C-terminus: Large ribosomal subunit protein uL18 (120 aa).

This sequence belongs to the universal ribosomal protein uL18 family. As to quaternary structure, part of the 50S ribosomal subunit; part of the 5S rRNA/L5/L18/L25 subcomplex. Contacts the 5S and 23S rRNAs.

Functionally, this is one of the proteins that bind and probably mediate the attachment of the 5S RNA into the large ribosomal subunit, where it forms part of the central protuberance. The sequence is that of Large ribosomal subunit protein uL18 from Clostridium botulinum (strain Eklund 17B / Type B).